A 363-amino-acid polypeptide reads, in one-letter code: UDP-N-acetylglucosamine--N-acetylmuramyl-(pentapeptide) pyrophosphoryl-undecaprenol N-acetylglucosamine transferase (363 aa).

UDP-N-acetyl-alpha-D-glucosamine is bound by residues 10 to 12 (TGG), N124, S195, I250, and Q295.

Belongs to the glycosyltransferase 28 family. MurG subfamily.

Its subcellular location is the cell membrane. The catalysed reaction is di-trans,octa-cis-undecaprenyl diphospho-N-acetyl-alpha-D-muramoyl-L-alanyl-D-glutamyl-meso-2,6-diaminopimeloyl-D-alanyl-D-alanine + UDP-N-acetyl-alpha-D-glucosamine = di-trans,octa-cis-undecaprenyl diphospho-[N-acetyl-alpha-D-glucosaminyl-(1-&gt;4)]-N-acetyl-alpha-D-muramoyl-L-alanyl-D-glutamyl-meso-2,6-diaminopimeloyl-D-alanyl-D-alanine + UDP + H(+). It functions in the pathway cell wall biogenesis; peptidoglycan biosynthesis. Functionally, cell wall formation. Catalyzes the transfer of a GlcNAc subunit on undecaprenyl-pyrophosphoryl-MurNAc-pentapeptide (lipid intermediate I) to form undecaprenyl-pyrophosphoryl-MurNAc-(pentapeptide)GlcNAc (lipid intermediate II). In Listeria monocytogenes serotype 4a (strain HCC23), this protein is UDP-N-acetylglucosamine--N-acetylmuramyl-(pentapeptide) pyrophosphoryl-undecaprenol N-acetylglucosamine transferase.